A 433-amino-acid polypeptide reads, in one-letter code: Sensor protein RstB (433 aa).

Residues 1–3 are Cytoplasmic-facing; sequence MKK. The helical transmembrane segment at 4 to 24 threads the bilayer; it reads LFIQFYLLLFVCFLVMSLLVG. At 25–135 the chain is on the periplasmic side; that stretch reads LVYKFTAERA…PYLYYLHQMR (111 aa). The chain crosses the membrane as a helical span at residues 136 to 156; it reads LLDIALIAFIAISLAFPVFIW. Residues 157–433 are Cytoplasmic-facing; the sequence is MRPHWQDMLK…WHNIPQFTSA (277 aa). The HAMP domain occupies 158-210; the sequence is RPHWQDMLKLEAAAQRFGDGHLNERIHFDEGSSFERLGVAFNQMADNINALIA. Residues 218–425 enclose the Histidine kinase domain; sequence GIAHELRTPL…RFSFSWPLWH (208 aa). H276 is modified (phosphohistidine; by autocatalysis).

Post-translationally, autophosphorylated.

It localises to the cell inner membrane. The catalysed reaction is ATP + protein L-histidine = ADP + protein N-phospho-L-histidine.. Its function is as follows. Member of the two-component regulatory system RstB/RstA. RstB functions as a membrane-associated protein kinase that phosphorylates RstA. The chain is Sensor protein RstB (rstB) from Escherichia coli (strain K12).